The following is a 337-amino-acid chain: MNKQDFYFDLPSELIAQYPLANRSDSRLLIYNRQTEEYGHYQFREIADFLQPGDLLVMNDSKVIPARLYGHKATGGKVELLVERITGDFTFLAHIKASKSLKSNDLIYLDAGKRLEVLERQDDLFLCKASENILDLLNDLGHIPLPPYIAREDESLDKERYQTVYAKCAGSVAAPTAGLHFDDAVLSSIRARGVNIAYVTLHVGAGTFRPVRCERIQDHKMHSEWFTVSPDLCAAVKAAKSMGNRVIAVGTTALRSLESAAMGGELIPCSRDTDIFIYPGYQFKVCDGLITNFHLPESTLVMLVSAFIGHQECMALYQEAIDKRYRFFSYGDASLLL.

It belongs to the QueA family. In terms of assembly, monomer.

It localises to the cytoplasm. The catalysed reaction is 7-aminomethyl-7-carbaguanosine(34) in tRNA + S-adenosyl-L-methionine = epoxyqueuosine(34) in tRNA + adenine + L-methionine + 2 H(+). Its pathway is tRNA modification; tRNA-queuosine biosynthesis. In terms of biological role, transfers and isomerizes the ribose moiety from AdoMet to the 7-aminomethyl group of 7-deazaguanine (preQ1-tRNA) to give epoxyqueuosine (oQ-tRNA). The polypeptide is S-adenosylmethionine:tRNA ribosyltransferase-isomerase (Legionella pneumophila (strain Paris)).